Reading from the N-terminus, the 293-residue chain is Ribosomal protein L11 methyltransferase (293 aa).

The S-adenosyl-L-methionine site is built by T145, G166, D188, and N230.

The protein belongs to the methyltransferase superfamily. PrmA family.

It is found in the cytoplasm. The enzyme catalyses L-lysyl-[protein] + 3 S-adenosyl-L-methionine = N(6),N(6),N(6)-trimethyl-L-lysyl-[protein] + 3 S-adenosyl-L-homocysteine + 3 H(+). In terms of biological role, methylates ribosomal protein L11. The chain is Ribosomal protein L11 methyltransferase from Shewanella woodyi (strain ATCC 51908 / MS32).